The primary structure comprises 811 residues: Lysine-specific histone demethylase 1 homolog 3 (811 aa).

Residues 1–10 show a composition bias toward pro residues; that stretch reads MSDQPPPYTP. Residues 1–79 are disordered; that stretch reads MSDQPPPYTP…PSAQPPPRAS (79 aa). Basic residues predominate over residues 44–55; sequence NKRKRTGFRRKL. Low complexity predominate over residues 56 to 71; sequence PSGSPAAPVAVAASPS. Positions 88-189 constitute an SWIRM domain; the sequence is NREPTAEAVT…FGVAPAIKER (102 aa). Residues E227, R229, R235, and E609 each coordinate FAD. The tract at residues 790–811 is disordered; the sequence is RNSSRTKTRPSKLKIGIPKSKS.

This sequence belongs to the flavin monoamine oxidase family. Requires FAD as cofactor.

Probable histone demethylase. The protein is Lysine-specific histone demethylase 1 homolog 3 of Oryza sativa subsp. indica (Rice).